A 491-amino-acid chain; its full sequence is Aspartyl/glutamyl-tRNA(Asn/Gln) amidotransferase subunit B (491 aa).

Belongs to the GatB/GatE family. GatB subfamily. As to quaternary structure, heterotrimer of A, B and C subunits.

The catalysed reaction is L-glutamyl-tRNA(Gln) + L-glutamine + ATP + H2O = L-glutaminyl-tRNA(Gln) + L-glutamate + ADP + phosphate + H(+). It catalyses the reaction L-aspartyl-tRNA(Asn) + L-glutamine + ATP + H2O = L-asparaginyl-tRNA(Asn) + L-glutamate + ADP + phosphate + 2 H(+). Functionally, allows the formation of correctly charged Asn-tRNA(Asn) or Gln-tRNA(Gln) through the transamidation of misacylated Asp-tRNA(Asn) or Glu-tRNA(Gln) in organisms which lack either or both of asparaginyl-tRNA or glutaminyl-tRNA synthetases. The reaction takes place in the presence of glutamine and ATP through an activated phospho-Asp-tRNA(Asn) or phospho-Glu-tRNA(Gln). The sequence is that of Aspartyl/glutamyl-tRNA(Asn/Gln) amidotransferase subunit B from Burkholderia lata (strain ATCC 17760 / DSM 23089 / LMG 22485 / NCIMB 9086 / R18194 / 383).